The sequence spans 95 residues: Antitoxin TacA1 (95 aa).

The tract at residues 59 to 95 is neutralization domain; the sequence is FNFNDEQYEEFINLLDAPVADDPVIEKLLARKPQWDV.

Belongs to the TacA antitoxin family. As to quaternary structure, homodimer. Forms a complex with cognate toxin TacT1. Forms a 4:2 antitoxin:toxin complex with cognate toxin TacT1.

Functionally, antitoxin component of a type II toxin-antitoxin (TA) system. Counteracts the toxic effect of cognate toxin TacT1 (T8), but not TacT2 or TacT3. Plays a role in persister cell formation. In terms of biological role, the TacA1-TacT1 complex binds (and probably represses) its own promoter DNA but not that of tacA3-tacT3, it does not repress the tacA3-tacT3 promoter. The sequence is that of Antitoxin TacA1 from Salmonella typhimurium (strain 14028s / SGSC 2262).